We begin with the raw amino-acid sequence, 122 residues long: Large ribosomal subunit protein bL12 (122 aa).

This sequence belongs to the bacterial ribosomal protein bL12 family. As to quaternary structure, homodimer. Part of the ribosomal stalk of the 50S ribosomal subunit. Forms a multimeric L10(L12)X complex, where L10 forms an elongated spine to which 2 to 4 L12 dimers bind in a sequential fashion. Binds GTP-bound translation factors.

Functionally, forms part of the ribosomal stalk which helps the ribosome interact with GTP-bound translation factors. Is thus essential for accurate translation. In Pasteurella multocida (strain Pm70), this protein is Large ribosomal subunit protein bL12.